We begin with the raw amino-acid sequence, 491 residues long: Probable cytosol aminopeptidase (491 aa).

Positions 260 and 265 each coordinate Mn(2+). K272 is an active-site residue. 3 residues coordinate Mn(2+): D284, D343, and E345. The active site involves R347.

The protein belongs to the peptidase M17 family. Mn(2+) serves as cofactor.

The protein resides in the cytoplasm. The catalysed reaction is Release of an N-terminal amino acid, Xaa-|-Yaa-, in which Xaa is preferably Leu, but may be other amino acids including Pro although not Arg or Lys, and Yaa may be Pro. Amino acid amides and methyl esters are also readily hydrolyzed, but rates on arylamides are exceedingly low.. The enzyme catalyses Release of an N-terminal amino acid, preferentially leucine, but not glutamic or aspartic acids.. Functionally, presumably involved in the processing and regular turnover of intracellular proteins. Catalyzes the removal of unsubstituted N-terminal amino acids from various peptides. In Trichormus variabilis (strain ATCC 29413 / PCC 7937) (Anabaena variabilis), this protein is Probable cytosol aminopeptidase.